The following is a 454-amino-acid chain: tRNA modification GTPase MnmE (454 aa).

Residues Arg23, Glu80, and Lys120 each contribute to the (6S)-5-formyl-5,6,7,8-tetrahydrofolate site. Residues 216-377 (GMKVVIAGRP…LRNHLKQSMG (162 aa)) enclose the TrmE-type G domain. Asn226 provides a ligand contact to K(+). Residues 226–231 (NAGKSS), 245–251 (TDIAGTT), 270–273 (DTAG), 335–338 (NKAD), and 358–360 (SAR) contribute to the GTP site. Residue Ser230 participates in Mg(2+) binding. Positions 245, 247, and 250 each coordinate K(+). Residue Thr251 participates in Mg(2+) binding. Lys454 contacts (6S)-5-formyl-5,6,7,8-tetrahydrofolate.

This sequence belongs to the TRAFAC class TrmE-Era-EngA-EngB-Septin-like GTPase superfamily. TrmE GTPase family. Homodimer. Heterotetramer of two MnmE and two MnmG subunits. K(+) serves as cofactor.

It localises to the cytoplasm. Functionally, exhibits a very high intrinsic GTPase hydrolysis rate. Involved in the addition of a carboxymethylaminomethyl (cmnm) group at the wobble position (U34) of certain tRNAs, forming tRNA-cmnm(5)s(2)U34. This chain is tRNA modification GTPase MnmE, found in Shigella boydii serotype 18 (strain CDC 3083-94 / BS512).